A 150-amino-acid polypeptide reads, in one-letter code: MKYQQLENLESGWKWKYLVKKHREGELITRYVEASAAQEAVNLLLALENEPVRVNVWIDRHMNPALLNRMKQTIRARRKRHFNAEHQHTRKKSIDLEFMVWQRLAGLAQRRGKTLSETIVQLIEDAEHKEKYATQMTTLKQDLQALLGKK.

The protein belongs to the MatP family. In terms of assembly, homodimer.

The protein resides in the cytoplasm. Required for spatial organization of the terminus region of the chromosome (Ter macrodomain) during the cell cycle. Prevents early segregation of duplicated Ter macrodomains during cell division. Binds specifically to matS, which is a 13 bp signature motif repeated within the Ter macrodomain. The sequence is that of Macrodomain Ter protein from Salmonella agona (strain SL483).